A 429-amino-acid chain; its full sequence is Cholesterol 7-desaturase nvd (429 aa).

Residues 23–43 traverse the membrane as a helical segment; it reads FVICLWTLAVTFIRIYWIFFV. Positions 98–201 constitute a Rieske domain; the sequence is YGILKSSQLK…SQEVDGFIFI (104 aa). [2Fe-2S] cluster is bound by residues Cys138, His140, Cys158, and His161.

Belongs to the cholesterol 7-desaturase family. [2Fe-2S] cluster is required as a cofactor. As to expression, expressed predominantly in the prothoracic gland and weakly in brain and malpighian tubules.

The protein localises to the membrane. It carries out the reaction cholesterol + NADPH + O2 + H(+) = 7-dehydrocholesterol + NADP(+) + 2 H2O. The enzyme catalyses cholesterol + NADH + O2 + H(+) = 7-dehydrocholesterol + NAD(+) + 2 H2O. It participates in steroid hormone biosynthesis; dafachronic acid biosynthesis. Functionally, catalyzes the production of 7-dehydrocholesterol (7-DHC or cholesta-5,7-dien-3beta-ol) by inserting a double bond (desaturating) at the C7-C8 single bond of cholesterol. Essential regulator of steroid biosynthesis, as this reaction is the first step in the synthesis of the steroid hormone Delta(7)-dafachronic acid. Required for insect molting, metamorphosis and body growth throughout development via the regulation of ecdysteroid biosynthesis in the prothoracic gland. This Drosophila melanogaster (Fruit fly) protein is Cholesterol 7-desaturase nvd.